The sequence spans 673 residues: DNA ligase (673 aa).

Residues 33 to 37 (DHQYD), 83 to 84 (SL), and Glu-117 contribute to the NAD(+) site. Catalysis depends on Lys-119, which acts as the N6-AMP-lysine intermediate. Residues Arg-140, Glu-175, Lys-282, and Lys-306 each contribute to the NAD(+) site. Residues Cys-400, Cys-403, Cys-418, and Cys-424 each coordinate Zn(2+). The region spanning 592–673 (RGSSAISGKT…WVKMVEDARS (82 aa)) is the BRCT domain.

Belongs to the NAD-dependent DNA ligase family. LigA subfamily. The cofactor is Mg(2+). It depends on Mn(2+) as a cofactor.

It carries out the reaction NAD(+) + (deoxyribonucleotide)n-3'-hydroxyl + 5'-phospho-(deoxyribonucleotide)m = (deoxyribonucleotide)n+m + AMP + beta-nicotinamide D-nucleotide.. Its function is as follows. DNA ligase that catalyzes the formation of phosphodiester linkages between 5'-phosphoryl and 3'-hydroxyl groups in double-stranded DNA using NAD as a coenzyme and as the energy source for the reaction. It is essential for DNA replication and repair of damaged DNA. This is DNA ligase from Anaplasma marginale (strain Florida).